The sequence spans 362 residues: 3-dehydroquinate synthase (362 aa).

Residues 72 to 77 (DGEAHK), 106 to 110 (GVIGD), 130 to 131 (TT), Lys143, and Lys152 contribute to the NAD(+) site. Residues Glu185, His248, and His265 each contribute to the Zn(2+) site.

It belongs to the sugar phosphate cyclases superfamily. Dehydroquinate synthase family. The cofactor is Co(2+). It depends on Zn(2+) as a cofactor. Requires NAD(+) as cofactor.

The protein resides in the cytoplasm. It carries out the reaction 7-phospho-2-dehydro-3-deoxy-D-arabino-heptonate = 3-dehydroquinate + phosphate. Its pathway is metabolic intermediate biosynthesis; chorismate biosynthesis; chorismate from D-erythrose 4-phosphate and phosphoenolpyruvate: step 2/7. In terms of biological role, catalyzes the conversion of 3-deoxy-D-arabino-heptulosonate 7-phosphate (DAHP) to dehydroquinate (DHQ). The polypeptide is 3-dehydroquinate synthase (Laribacter hongkongensis (strain HLHK9)).